Here is a 270-residue protein sequence, read N- to C-terminus: Interleukin-33 (270 aa).

Residues 1–65 (MKPKMKYSTN…EACYFRRETT (65 aa)) form a homeodomain-like HTH domain region. Positions 1 to 94 (MKPKMKYSTN…CQQQSTVECF (94 aa)) are excised as a propeptide. Positions 64 to 111 (TTKRPSLKTGRKHKRHLVLAACQQQSTVECFAFGISGVQKYTRALHDS) are interaction with RELA.

Belongs to the IL-1 family. Highly divergent. As to quaternary structure, forms a 1:1:1 heterotrimeric complex with its primary high-affinity receptor IL1RL1 and the coreceptor IL1RAP. Interacts with cargo receptor TMED10; the interaction mediates the translocation from the cytoplasm into the ERGIC (endoplasmic reticulum-Golgi intermediate compartment) and thereby secretion. (Microbial infection) Interacts (in reduced form) with H.polygyrus ARI. Post-translationally, the full-length protein can be released from cells and is able to signal via the IL1RL1/ST2 receptor. However, proteolytic processing by CELA1, CSTG/cathepsin G and ELANE/neutrophil elastase produces C-terminal peptides that are more active than the unprocessed full length protein. May also be proteolytically processed by calpains. Proteolytic cleavage mediated by apoptotic caspases including CASP3 and CASP7 results in IL33 inactivation. In vitro proteolytic cleavage by CASP1 was reported but could not be confirmed in vivo suggesting that IL33 is probably not a direct substrate for that caspase. Expressed at high level in high endothelial venules found in tonsils, Peyer patches and mesenteric lymph nodes. Almost undetectable in placenta.

The protein resides in the nucleus. Its subcellular location is the chromosome. It is found in the cytoplasm. It localises to the cytoplasmic vesicle. The protein localises to the secretory vesicle. The protein resides in the secreted. Functionally, cytokine that binds to and signals through the IL1RL1/ST2 receptor which in turn activates NF-kappa-B and MAPK signaling pathways in target cells. Involved in the maturation of Th2 cells inducing the secretion of T-helper type 2-associated cytokines. Also involved in activation of mast cells, basophils, eosinophils and natural killer cells. Acts as an enhancer of polarization of alternatively activated macrophages. Acts as a chemoattractant for Th2 cells, and may function as an 'alarmin', that amplifies immune responses during tissue injury. Induces rapid UCP2-dependent mitochondrial rewiring that attenuates the generation of reactive oxygen species and preserves the integrity of Krebs cycle required for persistent production of itaconate and subsequent GATA3-dependent differentiation of inflammation-resolving alternatively activated macrophages. In terms of biological role, in quiescent endothelia the uncleaved form is constitutively and abundantly expressed, and acts as a chromatin-associated nuclear factor with transcriptional repressor properties, it may sequester nuclear NF-kappaB/RELA, lowering expression of its targets. This form is rapidely lost upon angiogenic or pro-inflammatory activation. The protein is Interleukin-33 of Homo sapiens (Human).